A 457-amino-acid polypeptide reads, in one-letter code: NADP-specific glutamate dehydrogenase (457 aa).

Residue lysine 111 is part of the active site.

Belongs to the Glu/Leu/Phe/Val dehydrogenases family. Homohexamer.

The catalysed reaction is L-glutamate + NADP(+) + H2O = 2-oxoglutarate + NH4(+) + NADPH + H(+). The sequence is that of NADP-specific glutamate dehydrogenase (gdhA) from Agaricus bisporus (White button mushroom).